The chain runs to 120 residues: Chaperonin GroEL (120 aa).

Residue 23–27 (DGTTT) participates in ATP binding.

The protein belongs to the chaperonin (HSP60) family. As to quaternary structure, forms a cylinder of 14 subunits composed of two heptameric rings stacked back-to-back. Interacts with the co-chaperonin GroES.

It is found in the cytoplasm. It catalyses the reaction ATP + H2O + a folded polypeptide = ADP + phosphate + an unfolded polypeptide.. Together with its co-chaperonin GroES, plays an essential role in assisting protein folding. The GroEL-GroES system forms a nano-cage that allows encapsulation of the non-native substrate proteins and provides a physical environment optimized to promote and accelerate protein folding. This Mycobacterium shimoidei protein is Chaperonin GroEL.